Here is a 45-residue protein sequence, read N- to C-terminus: Bacteriocin fulvocin-C (45 aa).

Its function is as follows. Bacteriocin. The polypeptide is Bacteriocin fulvocin-C (Myxococcus fulvus).